The sequence spans 146 residues: MSINIDIKKITDLLNSSILFPDDVQELLREKYIVLERKSNGTPTVAHIYKTMARFDNKSIYRIAKFLFMNRPDVIKLLFLEDVEPLLPDKSINISINNTEYPQLEGPIGTKIALLELFNAFRTGISEPIPYYYLPLRKDINNIVTK.

This sequence belongs to the orthopoxvirus OPG114 family. Part of a complex composed of the kinase OPG054, OPG092, OPG100, OPG114, OPG115, OPG142 and OPG157.

The protein resides in the virion. Its function is as follows. Late protein which is part of a large complex required for early virion morphogenesis. This complex participates in the formation of virosomes and the incorporation of virosomal contents into nascent immature virions. This Vaccinia virus (strain Copenhagen) (VACV) protein is Core protein D2 (OPG114).